We begin with the raw amino-acid sequence, 160 residues long: SsrA-binding protein (160 aa).

Positions 131 to 160 (KKEFDKRHTEKERDSDREIQRAMRTKGKDD) are disordered.

The protein belongs to the SmpB family.

The protein localises to the cytoplasm. Required for rescue of stalled ribosomes mediated by trans-translation. Binds to transfer-messenger RNA (tmRNA), required for stable association of tmRNA with ribosomes. tmRNA and SmpB together mimic tRNA shape, replacing the anticodon stem-loop with SmpB. tmRNA is encoded by the ssrA gene; the 2 termini fold to resemble tRNA(Ala) and it encodes a 'tag peptide', a short internal open reading frame. During trans-translation Ala-aminoacylated tmRNA acts like a tRNA, entering the A-site of stalled ribosomes, displacing the stalled mRNA. The ribosome then switches to translate the ORF on the tmRNA; the nascent peptide is terminated with the 'tag peptide' encoded by the tmRNA and targeted for degradation. The ribosome is freed to recommence translation, which seems to be the essential function of trans-translation. This chain is SsrA-binding protein, found in Stutzerimonas stutzeri (strain A1501) (Pseudomonas stutzeri).